We begin with the raw amino-acid sequence, 134 residues long: uncharacterized protein (134 aa).

The region spanning 4-107 (IFTKIINREL…PTHSLSNFSF (104 aa)) is the HIT domain. The short motif at 91–95 (HLHIH) is the Histidine triad motif element.

This is an uncharacterized protein from Mycobacterium leprae (strain TN).